The sequence spans 397 residues: T-box transcription factor TBX19 (397 aa).

The segment at residues L48–D216 is a DNA-binding region (T-box). The interval R220–C248 is disordered.

It is found in the nucleus. Functionally, may be involved in the initial formation of the chordamesoderm. This chain is T-box transcription factor TBX19, found in Gallus gallus (Chicken).